The chain runs to 310 residues: Ribosomal RNA small subunit methyltransferase H (310 aa).

S-adenosyl-L-methionine contacts are provided by residues 32–34 (GGH), Asp52, Phe79, Asp100, and Gln107.

The protein belongs to the methyltransferase superfamily. RsmH family.

It localises to the cytoplasm. It carries out the reaction cytidine(1402) in 16S rRNA + S-adenosyl-L-methionine = N(4)-methylcytidine(1402) in 16S rRNA + S-adenosyl-L-homocysteine + H(+). Specifically methylates the N4 position of cytidine in position 1402 (C1402) of 16S rRNA. The polypeptide is Ribosomal RNA small subunit methyltransferase H (Bacillus thuringiensis subsp. konkukian (strain 97-27)).